Reading from the N-terminus, the 536-residue chain is Casein kinase I homolog RAG8 (536 aa).

The segment covering 26-42 has biased composition (polar residues); that stretch reads HSTQVLHGSGQHGMQPS. The interval 26–68 is disordered; that stretch reads HSTQVLHGSGQHGMQPSGNNVLNGLANGATGLQSSASSTSTRD. Residues 43-65 show a composition bias toward low complexity; the sequence is GNNVLNGLANGATGLQSSASSTS. Residues 77–361 enclose the Protein kinase domain; the sequence is YKIGKKIGEG…QKLDGEYDWM (285 aa). Residues 83–91 and Lys-106 each bind ATP; that span reads IGEGSFGVL. The active-site Proton acceptor is Asp-196. Polar residues-rich tracts occupy residues 407-420 and 427-436; these read NNLN…QSHS and DLTQGVSNAP. The tract at residues 407-524 is disordered; the sequence is NNLNGSNVPL…NGKVQVADSN (118 aa). Low complexity-rich tracts occupy residues 437 to 453 and 463 to 514; these read QQPQ…QHTQ and AYKQ…NQPQ. 2 S-palmitoyl cysteine lipidation sites follow: Cys-535 and Cys-536.

It belongs to the protein kinase superfamily. CK1 Ser/Thr protein kinase family. Casein kinase I subfamily.

It carries out the reaction L-seryl-[protein] + ATP = O-phospho-L-seryl-[protein] + ADP + H(+). It catalyses the reaction L-threonyl-[protein] + ATP = O-phospho-L-threonyl-[protein] + ADP + H(+). Functionally, casein kinases are operationally defined by their preferential utilization of acidic proteins such as caseins as substrates. This chain is Casein kinase I homolog RAG8 (RAG8), found in Kluyveromyces lactis (strain ATCC 8585 / CBS 2359 / DSM 70799 / NBRC 1267 / NRRL Y-1140 / WM37) (Yeast).